The sequence spans 360 residues: NAD(P)H-quinone oxidoreductase subunit 1, chloroplastic (360 aa).

A run of 9 helical transmembrane segments spans residues 27–47 (IWIFVPIFSLVLGIITGVLVI), 98–118 (FSIGPSIAVISILLSYSVIPF), 129–149 (IGIFLWIAISSIAPIGLLMSG), 165–185 (AAQSISYEIPLTLCVLSISLL), 203–223 (FWGWNLWRQPIGFIIFLISSL), 248–268 (YSGIKFGLFYVASYLNLLISS), 269–289 (LFVTVLYLGGWNISIPYISIL), 297–317 (IFGTTIGIFITLAKTYLFLFI), and 340–360 (FLLPISLGNLLLTTSFQLFSL).

It belongs to the complex I subunit 1 family. In terms of assembly, NDH is composed of at least 16 different subunits, 5 of which are encoded in the nucleus.

It localises to the plastid. The protein localises to the chloroplast thylakoid membrane. The catalysed reaction is a plastoquinone + NADH + (n+1) H(+)(in) = a plastoquinol + NAD(+) + n H(+)(out). It catalyses the reaction a plastoquinone + NADPH + (n+1) H(+)(in) = a plastoquinol + NADP(+) + n H(+)(out). Its function is as follows. NDH shuttles electrons from NAD(P)H:plastoquinone, via FMN and iron-sulfur (Fe-S) centers, to quinones in the photosynthetic chain and possibly in a chloroplast respiratory chain. The immediate electron acceptor for the enzyme in this species is believed to be plastoquinone. Couples the redox reaction to proton translocation, and thus conserves the redox energy in a proton gradient. The chain is NAD(P)H-quinone oxidoreductase subunit 1, chloroplastic from Lepidium virginicum (Virginia pepperweed).